The chain runs to 363 residues: Flagellar P-ring protein (363 aa).

The first 20 residues, 1–20 (MKYRLIVALAMLVLSLPSQA), serve as a signal peptide directing secretion.

Belongs to the FlgI family. The basal body constitutes a major portion of the flagellar organelle and consists of four rings (L,P,S, and M) mounted on a central rod.

The protein resides in the periplasm. It is found in the bacterial flagellum basal body. Its function is as follows. Assembles around the rod to form the L-ring and probably protects the motor/basal body from shearing forces during rotation. This Shewanella sp. (strain ANA-3) protein is Flagellar P-ring protein.